We begin with the raw amino-acid sequence, 160 residues long: Nucleotide-binding protein VFMJ11_1323 (160 aa).

It belongs to the YajQ family.

In terms of biological role, nucleotide-binding protein. This chain is Nucleotide-binding protein VFMJ11_1323, found in Aliivibrio fischeri (strain MJ11) (Vibrio fischeri).